A 216-amino-acid chain; its full sequence is Small ribosomal subunit protein uS3c (216 aa).

The region spanning 43–115 is the KH type-2 domain; sequence FENDWGTLYN…QTRIKVIQVN (73 aa).

This sequence belongs to the universal ribosomal protein uS3 family. Part of the 30S ribosomal subunit.

Its subcellular location is the plastid. The protein resides in the chloroplast. This is Small ribosomal subunit protein uS3c (rps3) from Emiliania huxleyi (Coccolithophore).